The chain runs to 128 residues: Z-ring associated protein G (128 aa).

The helical transmembrane segment at 7–27 threads the bilayer; sequence EIWFSISIAFLIGTLCGVLVM. Positions 37–75 form a coiled coil; the sequence is QIQLKSELASAEAKIEEQKQQLERHFEQSANLLENLAED. Positions 105 to 128 are disordered; that stretch reads NHANGDEDNQPRDYSDGSSGLLKS. The span at 107 to 119 shows a compositional bias: basic and acidic residues; that stretch reads ANGDEDNQPRDYS.

This sequence belongs to the ZapG family. In terms of assembly, homotetramer. In solution, is primarily monomeric but forms small amounts of stable tetramer and hexadecamer. The crystal structure of the cytosolic region shows a coiled-coil tetramer in the asymmetric unit that is very likely to be a physiologically relevant assembly of the protein.

The protein resides in the cell inner membrane. Involved in cell division, cell envelope biogenesis and cell shape maintenance. The polypeptide is Z-ring associated protein G (Haemophilus ducreyi (strain 35000HP / ATCC 700724)).